Reading from the N-terminus, the 1956-residue chain is Probable cation-transporting ATPase 1 (1956 aa).

Residues 1 to 35 (MHLMCTGLRNEKLINDRKILYGECNLNIKSDSFII) lie on the Cytoplasmic side of the membrane. Residues 36–58 (LLFKEIMNPFFIFQIFAMIVWSL) form a helical membrane-spanning segment. Topologically, residues 59 to 61 (DNY) are extracellular. A helical membrane pass occupies residues 62 to 80 (IEYTISILFITSISIILEL). Topologically, residues 81-407 (KNTIKNQKKI…KKELNLINDS (327 aa)) are cytoplasmic. A helical membrane pass occupies residues 408–427 (YKFLIILIIYALFSVFILLY). The Extracellular portion of the chain corresponds to 428 to 440 (ITLSNNEYTNHII). A helical transmembrane segment spans residues 441–462 (IKCLDIITDAIPPALPTTLTVG). Over 463-1818 (ISIAISRLKK…SLVNSFQLFK (1356 aa)) the chain is Cytoplasmic. Aspartate 496 serves as the catalytic 4-aspartylphosphate intermediate. Residues 901-938 (YGNNNDDNNDDDNNNDDDNNDDNNNDDNNNDDNNDDNN) are disordered. A compositionally biased stretch (acidic residues) spans 907–935 (DNNDDDNNNDDDNNDDNNNDDNNNDDNND). Mg(2+)-binding residues include aspartate 1760 and aspartate 1764. Residues 1819 to 1837 (FISLYSIMQCSQVLILYSI) traverse the membrane as a helical segment. Residues 1838 to 1845 (SNKLTDNQ) are Extracellular-facing. The helical transmembrane segment at 1846–1863 (YIFIDIVTILPLSIFMCW) threads the bilayer. Residues 1864-1881 (TSASEKLSKNIPIGKLFS) lie on the Cytoplasmic side of the membrane. Residues 1882-1905 (FPILISIYGQIIIQLFFVMISLVV) traverse the membrane as a helical segment. Residues 1906-1928 (LMNLSFYKYDKNKVMKEKSDDTY) lie on the Extracellular side of the membrane. A helical transmembrane segment spans residues 1929-1952 (LYKAQKYTLIYSLLFSKFVYVYIF). Topologically, residues 1953–1956 (KYKE) are cytoplasmic.

Belongs to the cation transport ATPase (P-type) (TC 3.A.3) family. Type V subfamily.

It is found in the membrane. The enzyme catalyses ATP + H2O = ADP + phosphate + H(+). The chain is Probable cation-transporting ATPase 1 from Plasmodium falciparum.